A 380-amino-acid chain; its full sequence is Polygalacturonase 2 (380 aa).

Residues 1–20 (MIAGSKLLMLGLFGALAVHA) form the signal peptide. Residues 21–38 (LPEPAKAQVTAAPKLEER) constitute a propeptide that is removed on maturation. A disulfide bond links C42 and C60. PbH1 repeat units follow at residues 173 to 204 (ATDLTLSGITVDNRDGDTDEGGHNTDAFDVGS) and 205 to 226 (STGITITGATVYNQDDCLAVNS). The Proton donor role is filled by D219. C221 and C237 are disulfide-bonded. H241 is an active-site residue. 3 PbH1 repeats span residues 256–277 (VANVIIENSQIQDSTNGVRIKT), 285–307 (VKNVTYKDITLSGITKYGIVIEQ), and 319–364 (TDGV…SVSG). N287 carries N-linked (GlcNAc...) asparagine glycosylation. Disulfide bonds link C347-C352 and C371-C380.

It belongs to the glycosyl hydrolase 28 family.

It is found in the secreted. It catalyses the reaction (1,4-alpha-D-galacturonosyl)n+m + H2O = (1,4-alpha-D-galacturonosyl)n + (1,4-alpha-D-galacturonosyl)m.. This chain is Polygalacturonase 2 (PG2), found in Penicillium olsonii.